Reading from the N-terminus, the 203-residue chain is MSRIGKLAIPVPAGATVTVAGQTIKVKGPKGELELVLPEVITPKFDNNELSVNPRADLIQAANDVIEAETAKGKRPPTFAQSLSQDARTQWGTARARAANMVEGVTKGYSKTLELVGVGYRAQMQGVDLKLALGYSHDVIYKAPQGIKIEAPKPTEIIISGADKQAVGQVAAEIKKFRPPEPYKGKGIRLQGEYVRRKEGKKK.

This sequence belongs to the universal ribosomal protein uL6 family. As to quaternary structure, part of the 50S ribosomal subunit.

Functionally, this protein binds to the 23S rRNA, and is important in its secondary structure. It is located near the subunit interface in the base of the L7/L12 stalk, and near the tRNA binding site of the peptidyltransferase center. The protein is Large ribosomal subunit protein uL6 of Hyphomonas neptunium (strain ATCC 15444).